The chain runs to 454 residues: Oxygen-dependent coproporphyrinogen-III oxidase, mitochondrial (454 aa).

The transit peptide at 1–110 (MALQLGRLSS…MLPKTSGTRA (110 aa)) directs the protein to the mitochondrion. The tract at residues 43–70 (AAGRVCRPPGPAGTEQSRGLGHGSTSRG) is disordered. A Phosphoserine modification is found at serine 112. Residues 193–202 (VLQDGCVFEK) are important for dimerization. Residue serine 244 participates in coproporphyrinogen III binding. Residue histidine 258 is the Proton donor of the active site. 260–262 (NYR) contributes to the coproporphyrinogen III binding site. Residues 392 to 428 (YVEFNLLYDRGTKFGLFTPGSRIESILMSLPLTARWE) are important for dimerization. N6-acetyllysine; alternate is present on lysine 404. Position 404 is an N6-succinyllysine; alternate (lysine 404). Position 411–413 (411–413 (GSR)) interacts with coproporphyrinogen III.

The protein belongs to the aerobic coproporphyrinogen-III oxidase family. Homodimer.

Its subcellular location is the mitochondrion intermembrane space. It carries out the reaction coproporphyrinogen III + O2 + 2 H(+) = protoporphyrinogen IX + 2 CO2 + 2 H2O. It functions in the pathway porphyrin-containing compound metabolism; protoporphyrin-IX biosynthesis; protoporphyrinogen-IX from coproporphyrinogen-III (O2 route): step 1/1. Its function is as follows. Catalyzes the aerobic oxidative decarboxylation of propionate groups of rings A and B of coproporphyrinogen-III to yield the vinyl groups in protoporphyrinogen-IX and participates to the sixth step in the heme biosynthetic pathway. The sequence is that of Oxygen-dependent coproporphyrinogen-III oxidase, mitochondrial from Homo sapiens (Human).